An 835-amino-acid polypeptide reads, in one-letter code: Translation initiation factor IF-2 (835 aa).

Residues 1 to 240 (MSDSDGKKTL…RKQERARQKA (240 aa)) are disordered. Residues 50–59 (AGKGGAGGVA) are compositionally biased toward gly residues. The segment covering 86–152 (KAREAEEAAQ…AEAAKKRAAA (67 aa)) has biased composition (basic and acidic residues). Over residues 153–169 (DKAAAAAPKSDAGVAPA) the composition is skewed to low complexity. The segment covering 184-205 (RKAEREREERGRGAKGRNDGGR) has biased composition (basic and acidic residues). In terms of domain architecture, tr-type G spans 332–500 (PRPPVITIMG…AIALQAEILE (169 aa)). Residues 341-348 (GHVDHGKT) form a G1 region. 341-348 (GHVDHGKT) serves as a coordination point for GTP. The G2 stretch occupies residues 366–370 (GITQH). The tract at residues 388 to 391 (DTPG) is G3. Residues 388–392 (DTPGH) and 442–445 (NKID) contribute to the GTP site. Residues 442 to 445 (NKID) are G4. Residues 478–480 (SAH) form a G5 region.

This sequence belongs to the TRAFAC class translation factor GTPase superfamily. Classic translation factor GTPase family. IF-2 subfamily.

The protein resides in the cytoplasm. One of the essential components for the initiation of protein synthesis. Protects formylmethionyl-tRNA from spontaneous hydrolysis and promotes its binding to the 30S ribosomal subunits. Also involved in the hydrolysis of GTP during the formation of the 70S ribosomal complex. In Ruegeria sp. (strain TM1040) (Silicibacter sp.), this protein is Translation initiation factor IF-2.